The sequence spans 487 residues: GTPase Der (487 aa).

EngA-type G domains lie at 3 to 167 (LTLA…DEME) and 203 to 378 (LQVA…EVWN). GTP contacts are provided by residues 9–16 (GRPNVGKS), 56–60 (DTAGL), and 119–122 (NKAE). Residues 167–190 (EQQAEEQAPETDVDLDPEDEDGEE) are compositionally biased toward acidic residues. A disordered region spans residues 167-191 (EQQAEEQAPETDVDLDPEDEDGEEV). Residues 209 to 216 (GRPNAGKS), 256 to 260 (DTAGM), and 321 to 324 (NKWD) contribute to the GTP site. Positions 379–465 (RRIPTAALNR…RLTLRGQGDK (87 aa)) constitute a KH-like domain. The tract at residues 458–487 (TLRGQGDKNPYKGRRKKNAGALAKHLKSRG) is disordered. Over residues 468 to 487 (YKGRRKKNAGALAKHLKSRG) the composition is skewed to basic residues.

This sequence belongs to the TRAFAC class TrmE-Era-EngA-EngB-Septin-like GTPase superfamily. EngA (Der) GTPase family. As to quaternary structure, associates with the 50S ribosomal subunit.

Functionally, GTPase that plays an essential role in the late steps of ribosome biogenesis. The polypeptide is GTPase Der (Ruegeria pomeroyi (strain ATCC 700808 / DSM 15171 / DSS-3) (Silicibacter pomeroyi)).